We begin with the raw amino-acid sequence, 371 residues long: 2-aminoethylphosphonate--pyruvate transaminase (371 aa).

At Lys198 the chain carries N6-(pyridoxal phosphate)lysine.

The protein belongs to the class-V pyridoxal-phosphate-dependent aminotransferase family. PhnW subfamily. As to quaternary structure, homodimer. The cofactor is pyridoxal 5'-phosphate.

The catalysed reaction is (2-aminoethyl)phosphonate + pyruvate = phosphonoacetaldehyde + L-alanine. Involved in phosphonate degradation. This chain is 2-aminoethylphosphonate--pyruvate transaminase, found in Syntrophobacter fumaroxidans (strain DSM 10017 / MPOB).